The chain runs to 434 residues: Xylose isomerase (434 aa).

Active-site residues include His100 and Asp103. Residues Glu231, Glu267, His270, Asp295, Asp306, Asp308, and Asp338 each contribute to the Mg(2+) site.

It belongs to the xylose isomerase family. As to quaternary structure, homotetramer. Mg(2+) serves as cofactor.

The protein resides in the cytoplasm. The enzyme catalyses alpha-D-xylose = alpha-D-xylulofuranose. This chain is Xylose isomerase, found in Ruegeria pomeroyi (strain ATCC 700808 / DSM 15171 / DSS-3) (Silicibacter pomeroyi).